We begin with the raw amino-acid sequence, 1032 residues long: Importin beta-like protein KAP120 (1032 aa).

Position 2 is an N-acetylalanine (alanine 2). The region spanning alanine 31 to glutamate 103 is the Importin N-terminal domain.

It belongs to the importin beta family. As to quaternary structure, interacts with GTP-bound GSP1 and RFP1. Associates with the nuclear pore complex.

Its subcellular location is the cytoplasm. It localises to the nucleus. In terms of biological role, functions in nuclear protein import as nuclear transport receptor. Serves as receptor for nuclear localization signals (NLS) in cargo substrates. Thought to mediate docking of the importin/substrate complex to the nuclear pore complex (NPC) through binding to nucleoporin and the complex is subsequently translocated through the pore by an energy requiring, RAN-dependent mechanism. Required for nuclear import of Ho endonuclease and RFP1, and involved in rRNA-processing and assembly or export of 60S ribosomal subunits. The sequence is that of Importin beta-like protein KAP120 (KAP120) from Saccharomyces cerevisiae (strain ATCC 204508 / S288c) (Baker's yeast).